Here is a 405-residue protein sequence, read N- to C-terminus: L-carnitine CoA-transferase (405 aa).

Residues lysine 97 and arginine 104 each coordinate CoA. The active-site Nucleophile is the aspartate 169.

Belongs to the CoA-transferase III family. CaiB subfamily. Homodimer.

Its subcellular location is the cytoplasm. The catalysed reaction is crotonobetainyl-CoA + (R)-carnitine = crotonobetaine + (R)-carnitinyl-CoA. It catalyses the reaction 4-(trimethylamino)butanoyl-CoA + (R)-carnitine = (R)-carnitinyl-CoA + 4-(trimethylamino)butanoate. It participates in amine and polyamine metabolism; carnitine metabolism. Functionally, catalyzes the reversible transfer of the CoA moiety from gamma-butyrobetainyl-CoA to L-carnitine to generate L-carnitinyl-CoA and gamma-butyrobetaine. Is also able to catalyze the reversible transfer of the CoA moiety from gamma-butyrobetainyl-CoA or L-carnitinyl-CoA to crotonobetaine to generate crotonobetainyl-CoA. This chain is L-carnitine CoA-transferase, found in Salmonella choleraesuis (strain SC-B67).